The chain runs to 260 residues: 3beta-hydroxysteroid dehydrogenase 2 (260 aa).

Residues aspartate 43, 69–70 (DV), asparagine 96, tyrosine 163, and lysine 167 each bind NAD(+). Catalysis depends on tyrosine 163, which acts as the Proton acceptor.

The protein belongs to the short-chain dehydrogenases/reductases (SDR) family.

It catalyses the reaction 3-oxo-5beta-cholan-24-oate + NADH + H(+) = isolithocholate + NAD(+). The enzyme catalyses 12alpha-hydroxy-3-oxo-5beta-cholan-24-oate + NADH + H(+) = isodeoxycholate + NAD(+). The catalysed reaction is 12alpha-hydroxy-3-oxo-5beta-cholan-24-oate + NADPH + H(+) = isodeoxycholate + NADP(+). It carries out the reaction 7alpha,12alpha-dihydroxy-3-oxo-5beta-cholan-24-oate + NADH + H(+) = isocholate + NAD(+). It catalyses the reaction 3-oxochenodeoxycholate + NADH + H(+) = isochenodeoxycholate + NAD(+). In terms of biological role, involved in the modification of secondary bile acids into iso-bile acids (3beta-bile acids) via epimerization of the 3-OH group through a 3-oxo-intermediate. Catalyzes the reduction of 12-alpha-hydroxy-3-oxo-5-beta-cholan-24-oate (3-oxo-DCA) and 3-oxo-5-beta-cholan-24-oate (3-oxo-LCA) to yield isodeoxycholate (isoDCA) and isolithocholate (isoLCA), respectively. Is also able to catalyze the reduction of 3-dehydrocholate (3-oxo-CA or 7alpha,12alpha-dihydroxy-3-oxo-5beta-cholan-24-oate) and 7-alpha-hydroxy-3-oxo-5-beta-cholan-24-oate (3-oxo-CDCA), into isocholate (isoCA) and isochenodeoxycholate (isoCDCA), respectively. Accepts both NADH and NADPH as cosubstrates. The conversion of the abundant bile acid deoxycholate (DCA) into isoDCA by the gut bacterium E.lenta favors the growth of the keystone commensal genus Bacteroides, since isoDCA is less cytotoxic than its parent compound, DCA; iso-bile acids have thus a potential role in modulating gut community composition. This is 3beta-hydroxysteroid dehydrogenase 2 from Eggerthella lenta (strain ATCC 25559 / DSM 2243 / CCUG 17323 / JCM 9979 / KCTC 3265 / NCTC 11813 / VPI 0255 / 1899 B) (Eubacterium lentum).